The following is a 215-amino-acid chain: Vesicle-trafficking protein SEC22b (215 aa).

Over 1 to 194 the chain is Cytoplasmic; it reads MVLLTMIARV…KYLNMRSTYA (194 aa). The 114-residue stretch at 6–119 folds into the Longin domain; sequence MIARVADGLP…YSFIEFDTFI (114 aa). N6-acetyllysine is present on lysine 38. The v-SNARE coiled-coil homology domain maps to 134 to 194; sequence NLGSINTELQ…KYLNMRSTYA (61 aa). The residue at position 137 (serine 137) is a Phosphoserine. Threonine 140 is subject to Phosphothreonine. Residues serine 164, serine 168, serine 174, and serine 177 each carry the phosphoserine modification. Residues 195–215 traverse the membrane as a helical; Anchor for type IV membrane protein segment; sequence KLAAVAVFFIMLIVYVRFWWL.

It belongs to the synaptobrevin family. Interacts with STX17. Component of two distinct SNARE complexes consisting of STX5, GOSR2/BOS1, BET1 and SEC22B or STX18, USE1L, BNIP1/SEC20L and SEC22B. YKT6 can probably replace SEC22B as subunit of either complex. Interacts with the COPII Sec23/24 complex composed of SEC23A and SEC24A; recruits SEC22B into COPII-coated vesicles to allow its transport from the endoplasmic reticulum to the Golgi. Interacts with BET1.

It is found in the endoplasmic reticulum membrane. The protein resides in the endoplasmic reticulum-Golgi intermediate compartment membrane. Its subcellular location is the golgi apparatus. The protein localises to the cis-Golgi network membrane. It localises to the trans-Golgi network membrane. It is found in the melanosome. SNARE involved in targeting and fusion of ER-derived transport vesicles with the Golgi complex as well as Golgi-derived retrograde transport vesicles with the ER. The protein is Vesicle-trafficking protein SEC22b (Sec22b) of Cricetulus griseus (Chinese hamster).